The following is a 296-amino-acid chain: D-alanine--D-alanine ligase (296 aa).

Positions 103-293 (KEILMHHRMP…FDSFVKRIIE (191 aa)) constitute an ATP-grasp domain. Residue 129-180 (ISFPVAVKPSSGGSSIATFKVKSIQELKHAYEEASKYGEVMIEQWVTGKEIT) coordinates ATP. Mg(2+) contacts are provided by Asp247, Glu260, and Asn262.

It belongs to the D-alanine--D-alanine ligase family. Requires Mg(2+) as cofactor. The cofactor is Mn(2+).

The protein localises to the cytoplasm. It catalyses the reaction 2 D-alanine + ATP = D-alanyl-D-alanine + ADP + phosphate + H(+). The protein operates within cell wall biogenesis; peptidoglycan biosynthesis. Functionally, cell wall formation. This chain is D-alanine--D-alanine ligase, found in Francisella tularensis subsp. tularensis (strain FSC 198).